The sequence spans 544 residues: Chaperonin GroEL (544 aa).

ATP is bound by residues 29 to 32 (TLGP), 86 to 90 (DGTTT), Gly-413, 476 to 478 (NAA), and Asp-492.

It belongs to the chaperonin (HSP60) family. Forms a cylinder of 14 subunits composed of two heptameric rings stacked back-to-back. Interacts with the co-chaperonin GroES.

The protein resides in the cytoplasm. It is found in the secreted. The catalysed reaction is ATP + H2O + a folded polypeptide = ADP + phosphate + an unfolded polypeptide.. Its function is as follows. Together with its co-chaperonin GroES, plays an essential role in assisting protein folding. The GroEL-GroES system forms a nano-cage that allows encapsulation of the non-native substrate proteins and provides a physical environment optimized to promote and accelerate protein folding. This chain is Chaperonin GroEL, found in Bacillus subtilis (strain 168).